The chain runs to 214 residues: Thiamine-phosphate synthase (214 aa).

4-amino-2-methyl-5-(diphosphooxymethyl)pyrimidine-binding positions include 37–41 and Asn73; that span reads QYREK. Residues Asp74 and Asp93 each coordinate Mg(2+). Position 112 (Ser112) interacts with 4-amino-2-methyl-5-(diphosphooxymethyl)pyrimidine. 139-141 contacts 2-[(2R,5Z)-2-carboxy-4-methylthiazol-5(2H)-ylidene]ethyl phosphate; it reads TIS. Lys142 is a binding site for 4-amino-2-methyl-5-(diphosphooxymethyl)pyrimidine. 2-[(2R,5Z)-2-carboxy-4-methylthiazol-5(2H)-ylidene]ethyl phosphate contacts are provided by residues Gly171 and 191–192; that span reads IS.

The protein belongs to the thiamine-phosphate synthase family. Mg(2+) is required as a cofactor.

The catalysed reaction is 2-[(2R,5Z)-2-carboxy-4-methylthiazol-5(2H)-ylidene]ethyl phosphate + 4-amino-2-methyl-5-(diphosphooxymethyl)pyrimidine + 2 H(+) = thiamine phosphate + CO2 + diphosphate. It carries out the reaction 2-(2-carboxy-4-methylthiazol-5-yl)ethyl phosphate + 4-amino-2-methyl-5-(diphosphooxymethyl)pyrimidine + 2 H(+) = thiamine phosphate + CO2 + diphosphate. The enzyme catalyses 4-methyl-5-(2-phosphooxyethyl)-thiazole + 4-amino-2-methyl-5-(diphosphooxymethyl)pyrimidine + H(+) = thiamine phosphate + diphosphate. Its pathway is cofactor biosynthesis; thiamine diphosphate biosynthesis; thiamine phosphate from 4-amino-2-methyl-5-diphosphomethylpyrimidine and 4-methyl-5-(2-phosphoethyl)-thiazole: step 1/1. Condenses 4-methyl-5-(beta-hydroxyethyl)thiazole monophosphate (THZ-P) and 2-methyl-4-amino-5-hydroxymethyl pyrimidine pyrophosphate (HMP-PP) to form thiamine monophosphate (TMP). This is Thiamine-phosphate synthase from Listeria monocytogenes serotype 4b (strain CLIP80459).